A 926-amino-acid polypeptide reads, in one-letter code: Tyrosine-protein phosphatase non-receptor type 4 (926 aa).

One can recognise an FERM domain in the interval V29–R312. 2 disordered regions span residues D380–R412 and E430–W475. Composition is skewed to polar residues over residues N398–G408 and E430–T456. At S474 the chain carries Phosphoserine. The region spanning L517 to S589 is the PDZ domain. The region spanning V655–V911 is the Tyrosine-protein phosphatase domain. Residues D820, C852 to R858, and Q896 contribute to the substrate site. C852 (phosphocysteine intermediate) is an active-site residue.

Belongs to the protein-tyrosine phosphatase family. Non-receptor class subfamily. In terms of assembly, interacts with MAPK12 (via C-terminus); this interaction abolishes PTPN4 catalytic autoinhibition and thus activates the phosphatase activity. (Microbial infection) Interacts with attenuated rabies virus protein G; this interaction is required for virally-induced apoptosis. Highly phosphorylated on serine and threonine residues but not on tyrosines. Post-translationally, cleaved and activated by calpain I/CAPN1.

It is found in the cell membrane. It localises to the cytoplasm. The protein localises to the cytoskeleton. It carries out the reaction O-phospho-L-tyrosyl-[protein] + H2O = L-tyrosyl-[protein] + phosphate. In terms of biological role, phosphatase that plays a role in immunity, learning, synaptic plasticity or cell homeostasis. Regulates neuronal cell homeostasis by protecting neurons against apoptosis. Negatively regulates TLR4-induced interferon beta production by dephosphorylating adapter TICAM2 and inhibiting subsequent TRAM-TRIF interaction. Also dephosphorylates the immunoreceptor tyrosine-based activation motifs/ITAMs of the TCR zeta subunit and thereby negatively regulates TCR-mediated signaling pathway. May act at junctions between the membrane and the cytoskeleton. This chain is Tyrosine-protein phosphatase non-receptor type 4 (PTPN4), found in Homo sapiens (Human).